The following is a 689-amino-acid chain: PR domain zinc finger protein 8 (689 aa).

In terms of domain architecture, SET spans 16-131 (KAVQQCLTDI…KDEELLVWYG (116 aa)). Tyr130 contacts S-adenosyl-L-methionine. The segment at 155–183 (YTCLECSQRFQFEFPYVAHLRFRCPKRLH) adopts a C2H2-type 1 zinc-finger fold. Disordered regions lie at residues 185-333 (ADIS…VGGR) and 397-506 (SLQE…QPAR). Gly residues predominate over residues 193 to 210 (QGGGVGTKDHGGGGGGGK). Composition is skewed to low complexity over residues 241–258 (PESSNPSAAAGGSSAKPS) and 273–286 (GGSSCSPAQSLSSG). The segment covering 322–333 (EGGGGAGLVGGR) has biased composition (gly residues). Residues 423 to 433 (STPAAASPVGA) are compositionally biased toward low complexity. Over residues 472–491 (TSGGGGTGAGAAGGAGGGQG) the composition is skewed to gly residues. 2 consecutive C2H2-type zinc fingers follow at residues 625–648 (NWCAKCNASFRMTSDLVYHMRSHH) and 666–688 (LKCPICNESFRERHHLSRHMTSH).

It belongs to the class V-like SAM-binding methyltransferase superfamily. Interacts with EPM2A and NHLRC1. This interaction sequesters EPM2A and NHLRC1 to the nucleus. Interacts with BHLHE22. In terms of tissue distribution, expressed in brain, heart, skeletal muscle, testes, prostate.

It is found in the nucleus. Functionally, probable histone methyltransferase, preferentially acting on 'Lys-9' of histone H3. Involved in the control of steroidogenesis through transcriptional repression of steroidogenesis marker genes such as CYP17A1 and LHCGR. Forms with BHLHE22 a transcriptional repressor complex controlling genes involved in neural development and neuronal differentiation. In the retina, it is required for rod bipolar and type 2 OFF-cone bipolar cell survival. The sequence is that of PR domain zinc finger protein 8 (PRDM8) from Homo sapiens (Human).